A 904-amino-acid polypeptide reads, in one-letter code: Envelope glycoprotein B (904 aa).

A signal peptide spans 1-30 (MRQGAPARGRRWFVVWALLGLTLGVLVASA). Positions 31–52 (APSSPGTPGVAAATQAANGGPA) are enriched in low complexity. The disordered stretch occupies residues 31–88 (APSSPGTPGVAAATQAANGGPATPAPPAPGAPPTGDPKPKKNRKPKPPKPPRPAGDNA). At 31–774 (APSSPGTPGV…SGVSSFMSNP (744 aa)) the chain is on the virion surface side. Residues 53–66 (TPAPPAPGAPPTGD) show a composition bias toward pro residues. A compositionally biased stretch (basic residues) spans 70-79 (KKNRKPKPPK). Residues N87 and N141 are each glycosylated (N-linked (GlcNAc...) asparagine; by host). 5 cysteine pairs are disulfide-bonded: C116–C573, C133–C529, C207–C271, C364–C412, and C596–C633. Involved in fusion and/or binding to host membrane regions lie at residues 173–179 (VWFGHRY) and 258–265 (RVEAFHRY). Residues N398 and N430 are each glycosylated (N-linked (GlcNAc...) asparagine; by host). The interval 470–492 (REQSRKPPNPTPPPPGASANASV) is disordered. Residues 476–485 (PPNPTPPPPG) show a composition bias toward pro residues. A glycan (N-linked (GlcNAc...) asparagine; by host) is linked at N489. N674 carries N-linked (GlcNAc...) asparagine; by host glycosylation. The hydrophobic membrane proximal region stretch occupies residues 719 to 772 (IDTVIHADANAAMFAGLGAFFEGMGDLGRAVGKVVMGIVGGVVSAVSGVSSFMS). A helical transmembrane segment spans residues 775–795 (FGALAVGLLVLAGLAAAFFAF). Residues 796-904 (RYVMRLQSNP…KDGDADEDDL (109 aa)) lie on the Intravirion side of the membrane. Positions 849-852 (YMAL) match the Golgi targeting motif. Positions 883-904 (KRRNTNYTQVPNKDGDADEDDL) are disordered. Positions 889–892 (YTQV) match the Internalization motif motif.

This sequence belongs to the herpesviridae glycoprotein B family. As to quaternary structure, homotrimer; disulfide-linked. Interacts with host receptor MYH9/NMMHC-IIA. Interacts with host receptor MYH10/NMMHC-IIB. Binds to heparan sulfate proteoglycans. Interacts with gH/gL heterodimer. Interacts with host DEFA1, DEFA2 and DEFA3; these interactions inhibit viral infection. In terms of processing, the cytoplasmic tail is phosphorylated by the viral kinase US3. Phosphorylation may be linked to a down-regulation of gB expression on cell surface. Post-translationally, ubiquitinated.

It is found in the virion membrane. The protein resides in the host cell membrane. It localises to the host endosome membrane. Its subcellular location is the host Golgi apparatus membrane. Functionally, envelope glycoprotein that forms spikes at the surface of virion envelope and binds to the host cell entry receptors MYH9/NMMHC-IIA and MYH10/NMMHC-IIB, promoting the virus entry into host cells. Essential for the initial attachment to heparan sulfate moieties of the host cell surface proteoglycans. Involved in fusion of viral and cellular membranes leading to virus entry into the host cell: following initial binding to its host cell entry receptors, membrane fusion is mediated by the fusion machinery composed at least of gB and the heterodimer gH/gL. May be involved in the fusion between the virion envelope and the outer nuclear membrane during virion egress. Also plays a role, together with gK, in virus-induced cell-to-cell fusion (syncytia formation). This Homo sapiens (Human) protein is Envelope glycoprotein B.